Reading from the N-terminus, the 72-residue chain is General transcription factor IIH subunit 5 (72 aa).

Belongs to the TFB5 family. As to quaternary structure, component of the 7-subunit TFIIH core complex composed of XPB/repB, XPD/repD, gtf2h1, gtf2h2, gtf2h3, gtf2h4 and gtf2h5, which is active in NER. The core complex associates with the 3-subunit CDK-activating kinase (CAK) module composed of cycH/cyclin H, cdk7 and mnat1 to form the 10-subunit holoenzyme (holo-TFIIH) active in transcription.

It is found in the nucleus. Component of the general transcription and DNA repair factor IIH (TFIIH) core complex, which is involved in general and transcription-coupled nucleotide excision repair (NER) of damaged DNA and, when complexed to CAK, in RNA transcription by RNA polymerase II. In NER, TFIIH acts by opening DNA around the lesion to allow the excision of the damaged oligonucleotide and its replacement by a new DNA fragment. In transcription, TFIIH has an essential role in transcription initiation. When the pre-initiation complex (PIC) has been established, TFIIH is required for promoter opening and promoter escape. Phosphorylation of the C-terminal tail (CTD) of the largest subunit of RNA polymerase II by the kinase module CAK controls the initiation of transcription. This is General transcription factor IIH subunit 5 (gtf2h5) from Dictyostelium discoideum (Social amoeba).